A 138-amino-acid chain; its full sequence is Probable prefoldin subunit 4 (138 aa).

The protein belongs to the prefoldin subunit beta family. As to quaternary structure, heterohexamer of two PFD-alpha type and four PFD-beta type subunits.

In terms of biological role, binds specifically to cytosolic chaperonin (c-CPN) and transfers target proteins to it. Binds to nascent polypeptide chain and promotes folding in an environment in which there are many competing pathways for nonnative proteins. The chain is Probable prefoldin subunit 4 from Drosophila melanogaster (Fruit fly).